Consider the following 146-residue polypeptide: Hemoglobin subunit beta (146 aa).

V1 carries the post-translational modification N-acetylvaline. The 145-residue stretch at Q2–H146 folds into the Globin domain. S44 is subject to Phosphoserine. K59 carries the N6-acetyllysine modification. H63 provides a ligand contact to heme b. Residue K82 is modified to N6-acetyllysine. Heme b is bound at residue H92. C93 bears the S-nitrosocysteine mark. K144 is modified (N6-acetyllysine).

It belongs to the globin family. Heterotetramer of two alpha chains and two beta chains. In terms of tissue distribution, red blood cells.

Its function is as follows. Involved in oxygen transport from the lung to the various peripheral tissues. The chain is Hemoglobin subunit beta (HBB) from Equus caballus (Horse).